A 280-amino-acid chain; its full sequence is Ribosomal RNA small subunit methyltransferase A (280 aa).

6 residues coordinate S-adenosyl-L-methionine: H15, L17, G42, E64, D89, and N109.

Belongs to the class I-like SAM-binding methyltransferase superfamily. rRNA adenine N(6)-methyltransferase family. RsmA subfamily.

It is found in the cytoplasm. It carries out the reaction adenosine(1518)/adenosine(1519) in 16S rRNA + 4 S-adenosyl-L-methionine = N(6)-dimethyladenosine(1518)/N(6)-dimethyladenosine(1519) in 16S rRNA + 4 S-adenosyl-L-homocysteine + 4 H(+). Its function is as follows. Specifically dimethylates two adjacent adenosines (A1518 and A1519) in the loop of a conserved hairpin near the 3'-end of 16S rRNA in the 30S particle. May play a critical role in biogenesis of 30S subunits. This Prochlorococcus marinus (strain MIT 9303) protein is Ribosomal RNA small subunit methyltransferase A.